Reading from the N-terminus, the 383-residue chain is Deoxyhypusine synthase-like protein (383 aa).

The protein belongs to the deoxyhypusine synthase family.

This chain is Deoxyhypusine synthase-like protein, found in Nostoc sp. (strain PCC 7120 / SAG 25.82 / UTEX 2576).